Consider the following 415-residue polypeptide: Serine hydroxymethyltransferase (415 aa).

Residues L117 and 121-123 (GHL) contribute to the (6S)-5,6,7,8-tetrahydrofolate site. K226 carries the post-translational modification N6-(pyridoxal phosphate)lysine.

The protein belongs to the SHMT family. In terms of assembly, homodimer. The cofactor is pyridoxal 5'-phosphate.

The protein resides in the cytoplasm. It catalyses the reaction (6R)-5,10-methylene-5,6,7,8-tetrahydrofolate + glycine + H2O = (6S)-5,6,7,8-tetrahydrofolate + L-serine. The protein operates within one-carbon metabolism; tetrahydrofolate interconversion. It functions in the pathway amino-acid biosynthesis; glycine biosynthesis; glycine from L-serine: step 1/1. Functionally, catalyzes the reversible interconversion of serine and glycine with tetrahydrofolate (THF) serving as the one-carbon carrier. This reaction serves as the major source of one-carbon groups required for the biosynthesis of purines, thymidylate, methionine, and other important biomolecules. Also exhibits THF-independent aldolase activity toward beta-hydroxyamino acids, producing glycine and aldehydes, via a retro-aldol mechanism. The chain is Serine hydroxymethyltransferase from Dehalococcoides mccartyi (strain ATCC BAA-2100 / JCM 16839 / KCTC 5957 / BAV1).